A 479-amino-acid chain; its full sequence is Phosphoglycerate kinase, glycosomal (479 aa).

(2R)-3-phosphoglycerate-binding residues include valine 23, aspartate 24, phenylalanine 25, asparagine 26, arginine 39, serine 61, histidine 62, glycine 64, arginine 65, arginine 132, histidine 168, and arginine 169. Glycine 214 and alanine 215 together coordinate ADP. Glycine 214 contacts CDP. AMP-binding residues include alanine 215 and lysine 216. Alanine 215 provides a ligand contact to ATP. Residue alanine 215 coordinates Mg(2+). A (2R)-3-phosphoglycerate-binding site is contributed by lysine 216. Aspartate 219 contributes to the CDP binding site. Aspartate 219 lines the Mg(2+) pocket. Lysine 220 and glycine 238 together coordinate ADP. Lysine 220 lines the AMP pocket. Lysine 220 provides a ligand contact to ATP. Glycine 238 serves as a coordination point for CDP. Residues alanine 239 and alanine 311 each coordinate AMP. Residues alanine 239 and alanine 311 each coordinate ATP. ADP contacts are provided by alanine 311 and asparagine 335. CDP-binding residues include glycine 336 and phenylalanine 341. Residues phenylalanine 341, glutamate 342, aspartate 374, and threonine 375 each contribute to the ADP site. Glutamate 342 is an AMP binding site. ATP is bound by residues glutamate 342, aspartate 374, and threonine 375. Residue aspartate 374 coordinates Mg(2+).

This sequence belongs to the phosphoglycerate kinase family. In terms of assembly, monomer. Mg(2+) serves as cofactor.

Its subcellular location is the glycosome. The enzyme catalyses (2R)-3-phosphoglycerate + ATP = (2R)-3-phospho-glyceroyl phosphate + ADP. Its pathway is carbohydrate degradation; glycolysis; pyruvate from D-glyceraldehyde 3-phosphate: step 2/5. The sequence is that of Phosphoglycerate kinase, glycosomal (PGKC) from Leishmania mexicana.